The primary structure comprises 742 residues: Zinc finger MYND domain-containing protein 15 (742 aa).

The disordered stretch occupies residues 109–199; sequence LEDGEEGEEE…QKRKGQRSEA (91 aa). Acidic residues predominate over residues 110–127; that stretch reads EDGEEGEEEEEEDEEEEK. Positions 151–161 are enriched in polar residues; it reads SRESPQETNPP. The span at 166 to 189 shows a compositional bias: basic and acidic residues; that stretch reads EAAREAGGGKDGCREDRVENETRP. Residues C313, C316, C328, C331, C337, C341, H355, and C359 each coordinate Zn(2+). The MYND-type zinc-finger motif lies at 313–359; sequence CHVCHRHSFEAKLTPCPQCSAVLYCGEACLRADWQRCPDDVSHRFWC. Disordered stretches follow at residues 565–590 and 701–742; these read EVSV…GRRD and QGSG…RRRK. Pro residues predominate over residues 708–724; the sequence is APGPPPPSPTPSAPPAP. A compositionally biased stretch (basic residues) spans 725–742; it reads TRRRRGEKKPGRGARRRK.

As to quaternary structure, interacts with HDAC1, HDAC3, HDAC6 and, to a lesser extent, with HDAC7.

Its subcellular location is the nucleus. The protein resides in the cytoplasm. Acts as a transcriptional repressor through interaction with histone deacetylases (HDACs). May be important for spermiogenesis. This Homo sapiens (Human) protein is Zinc finger MYND domain-containing protein 15 (ZMYND15).